The primary structure comprises 125 residues: Snaclec B7 (125 aa).

3 cysteine pairs are disulfide-bonded: Cys2/Cys13, Cys30/Cys119, and Cys96/Cys111. Positions 9 to 120 (HEGHCYKVFK…CNISQYFVCQ (112 aa)) constitute a C-type lectin domain. The N-linked (GlcNAc...) asparagine glycan is linked to Asn112.

It belongs to the snaclec family. In terms of assembly, heterodimer; disulfide-linked. In terms of tissue distribution, expressed by the venom gland.

It is found in the secreted. Interferes with one step of hemostasis (modulation of platelet aggregation, or coagulation cascade, for example). The protein is Snaclec B7 of Macrovipera lebetinus (Levantine viper).